We begin with the raw amino-acid sequence, 366 residues long: tRNA N6-adenosine threonylcarbamoyltransferase (366 aa).

3 residues coordinate a divalent metal cation: histidine 130, histidine 134, and tyrosine 151. Substrate contacts are provided by residues 151 to 155 (YVSGG), aspartate 183, glycine 198, glutamate 202, and asparagine 297. Position 325 (aspartate 325) interacts with a divalent metal cation.

The protein belongs to the KAE1 / TsaD family. As to quaternary structure, component of the EKC/KEOPS complex composed of at least BUD32, CGI121, GON7, KAE1 and PCC1; the whole complex dimerizes. The cofactor is a divalent metal cation.

Its subcellular location is the cytoplasm. It localises to the nucleus. It catalyses the reaction L-threonylcarbamoyladenylate + adenosine(37) in tRNA = N(6)-L-threonylcarbamoyladenosine(37) in tRNA + AMP + H(+). In terms of biological role, component of the EKC/KEOPS complex that is required for the formation of a threonylcarbamoyl group on adenosine at position 37 (t(6)A37) in tRNAs that read codons beginning with adenine. The complex is probably involved in the transfer of the threonylcarbamoyl moiety of threonylcarbamoyl-AMP (TC-AMP) to the N6 group of A37. KAE1 likely plays a direct catalytic role in this reaction, but requires other protein(s) of the complex to fulfill this activity. The EKC/KEOPS complex also promotes both telomere uncapping and telomere elongation. The complex is required for efficient recruitment of transcriptional coactivators. The sequence is that of tRNA N6-adenosine threonylcarbamoyltransferase from Cryptococcus neoformans var. neoformans serotype D (strain JEC21 / ATCC MYA-565) (Filobasidiella neoformans).